Here is a 727-residue protein sequence, read N- to C-terminus: DNA topoisomerase 3 (727 aa).

Residues 3-136 (KTVVLAEKPS…LKRLWISSVT (134 aa)) enclose the Toprim domain. Residues glutamate 9 and aspartate 105 each coordinate Mg(2+). One can recognise a Topo IA-type catalytic domain in the interval 153–592 (FENLYHSAVA…EMKEYAKQTI (440 aa)). Residues 187 to 192 (SCGRVQ) are interaction with DNA. The active-site O-(5'-phospho-DNA)-tyrosine intermediate is tyrosine 310. Positions 685–711 (RRAKDKNSKASKRDVHSYMKKQNKDEP) are enriched in basic and acidic residues. The interval 685–713 (RRAKDKNSKASKRDVHSYMKKQNKDEPIN) is disordered.

It belongs to the type IA topoisomerase family. Mg(2+) serves as cofactor.

The enzyme catalyses ATP-independent breakage of single-stranded DNA, followed by passage and rejoining.. Functionally, releases the supercoiling and torsional tension of DNA, which is introduced during the DNA replication and transcription, by transiently cleaving and rejoining one strand of the DNA duplex. Introduces a single-strand break via transesterification at a target site in duplex DNA. The scissile phosphodiester is attacked by the catalytic tyrosine of the enzyme, resulting in the formation of a DNA-(5'-phosphotyrosyl)-enzyme intermediate and the expulsion of a 3'-OH DNA strand. The free DNA strand then undergoes passage around the unbroken strand, thus removing DNA supercoils. Finally, in the religation step, the DNA 3'-OH attacks the covalent intermediate to expel the active-site tyrosine and restore the DNA phosphodiester backbone. The sequence is that of DNA topoisomerase 3 from Bacillus licheniformis (strain ATCC 14580 / DSM 13 / JCM 2505 / CCUG 7422 / NBRC 12200 / NCIMB 9375 / NCTC 10341 / NRRL NRS-1264 / Gibson 46).